A 325-amino-acid polypeptide reads, in one-letter code: Secreted RxLR effector protein RXLR-C07 (325 aa).

The N-terminal stretch at 1–19 (MQGVRITILWCIVLATIYA) is a signal peptide. TPR repeat units lie at residues 37–75 (RGLRNAGMKANDERMFKDAIEKLRHAISLLHNRVFGEER), 92–125 (AQILNDYGSVLIRTKQYDEAIEVLEDSVAMIEKI), 134–167 (GLSLRSLADAYMEKKAFKSAIKRYKTLRKHVKKG), 218–251 (AELYMELSSAHVEVGEIDDALRAAETASAIFLQR), and 260–293 (AFSLNALAGVKMQQKKVDEAIDLLDRAHNIAVSI). The RxLR-dEER motif lies at 37–75 (RGLRNAGMKANDERMFKDAIEKLRHAISLLHNRVFGEER).

This sequence belongs to the RxLR effector family.

It localises to the secreted. It is found in the host cytoplasm. The protein localises to the host nucleus. Its subcellular location is the host nucleolus. Its function is as follows. Secreted effector that suppresses pattern-triggered immunity (PTI) in plant host. The protein is Secreted RxLR effector protein RXLR-C07 of Plasmopara halstedii (Downy mildew of sunflower).